The chain runs to 189 residues: Probable nicotinate-nucleotide adenylyltransferase (189 aa).

This sequence belongs to the NadD family.

The catalysed reaction is nicotinate beta-D-ribonucleotide + ATP + H(+) = deamido-NAD(+) + diphosphate. Its pathway is cofactor biosynthesis; NAD(+) biosynthesis; deamido-NAD(+) from nicotinate D-ribonucleotide: step 1/1. Its function is as follows. Catalyzes the reversible adenylation of nicotinate mononucleotide (NaMN) to nicotinic acid adenine dinucleotide (NaAD). The polypeptide is Probable nicotinate-nucleotide adenylyltransferase (Bacillus pumilus (strain SAFR-032)).